Here is a 377-residue protein sequence, read N- to C-terminus: MRAIAPRSIRGEFRGRLGGFALDAAFSVPATGITGLFGPSGCGKSTVLRCLAGLQRLPGGRCDVDGDVWQDEATFLKPHQRPIGYVFQEASLFQHLSVRANLLYGAPRGGADAAEGAVGFDEVIELLGLSHLLDRAPRNLSGGERQRVAIGRALLSQPKLLLMDEPLSALDRLTKDEILPFLERLHARLSLPVIYVSHDITEIERLADHLILMRAGKVLAAGPLTELQSDPALPLATARDAAVNVDAIAESYDSVYGLLTLRLDGGRLLVPSAPVQPGEARRIRIAAGDVSLAREAPHRTSILNILPARIATTSPVGPNEVLVVLALGPGGQGARLLARVTRRSWDQLQLAAGDELFAQIKGVALAPERGAARDSAS.

One can recognise an ABC transporter domain in the interval isoleucine 4 to aspartate 240. Residue glycine 38 to serine 45 participates in ATP binding. The Mop domain maps to arginine 299–arginine 369.

It belongs to the ABC transporter superfamily. Molybdate importer (TC 3.A.1.8) family. As to quaternary structure, the complex is composed of two ATP-binding proteins (ModC), two transmembrane proteins (ModB) and a solute-binding protein (ModA).

The protein localises to the cell inner membrane. It carries out the reaction molybdate(out) + ATP + H2O = molybdate(in) + ADP + phosphate + H(+). Its function is as follows. Part of the ABC transporter complex ModABC involved in molybdenum import. Responsible for energy coupling to the transport system. This chain is Molybdenum import ATP-binding protein ModC, found in Rhodopseudomonas palustris (strain HaA2).